Consider the following 356-residue polypeptide: Probable D-xylulose reductase A (356 aa).

Residues C45, H70, and E71 each contribute to the Zn(2+) site. 180–185 (GAGPVG) is an NAD(+) binding site.

It belongs to the zinc-containing alcohol dehydrogenase family. Zn(2+) serves as cofactor.

It carries out the reaction xylitol + NAD(+) = D-xylulose + NADH + H(+). It functions in the pathway carbohydrate degradation; L-arabinose degradation via L-arabinitol; D-xylulose 5-phosphate from L-arabinose (fungal route): step 4/5. Its function is as follows. Xylitol dehydrogenase which catalyzes the conversion of xylitol to D-xylulose. Xylose is a major component of hemicelluloses such as xylan. Most fungi utilize D-xylose via three enzymatic reactions, xylose reductase (XR), xylitol dehydrogenase (XDH), and xylulokinase, to form xylulose 5-phosphate, which enters pentose phosphate pathway. The polypeptide is Probable D-xylulose reductase A (xdhA) (Arthroderma otae (strain ATCC MYA-4605 / CBS 113480) (Microsporum canis)).